We begin with the raw amino-acid sequence, 125 residues long: Large ribosomal subunit protein bL12 (125 aa).

It belongs to the bacterial ribosomal protein bL12 family. As to quaternary structure, homodimer. Part of the ribosomal stalk of the 50S ribosomal subunit. Forms a multimeric L10(L12)X complex, where L10 forms an elongated spine to which 2 to 4 L12 dimers bind in a sequential fashion. Binds GTP-bound translation factors.

Forms part of the ribosomal stalk which helps the ribosome interact with GTP-bound translation factors. Is thus essential for accurate translation. The sequence is that of Large ribosomal subunit protein bL12 from Rickettsia prowazekii (strain Madrid E).